The following is a 78-amino-acid chain: Acyl carrier protein (78 aa).

Positions 2–77 (SEIASRVKAI…DAVSYIEANA (76 aa)) constitute a Carrier domain. The residue at position 37 (Ser-37) is an O-(pantetheine 4'-phosphoryl)serine.

This sequence belongs to the acyl carrier protein (ACP) family. Post-translationally, 4'-phosphopantetheine is transferred from CoA to a specific serine of apo-ACP by AcpS. This modification is essential for activity because fatty acids are bound in thioester linkage to the sulfhydryl of the prosthetic group.

The protein resides in the cytoplasm. The protein operates within lipid metabolism; fatty acid biosynthesis. Functionally, carrier of the growing fatty acid chain in fatty acid biosynthesis. This is Acyl carrier protein from Phocaeicola vulgatus (strain ATCC 8482 / DSM 1447 / JCM 5826 / CCUG 4940 / NBRC 14291 / NCTC 11154) (Bacteroides vulgatus).